The chain runs to 278 residues: C-type lectin domain family 1 member A (278 aa).

Residues 1–42 are disordered; it reads MLAKYSSTRDMLDADGDTTMSLHSQASATSQRPELGHTEHQR. Residues 1 to 52 are Cytoplasmic-facing; sequence MLAKYSSTRDMLDADGDTTMSLHSQASATSQRPELGHTEHQRPSSAWRPVAL. Residues 18–32 are compositionally biased toward polar residues; that stretch reads TTMSLHSQASATSQR. A helical; Signal-anchor for type II membrane protein membrane pass occupies residues 53 to 73; it reads ILLTLCLVLLIGLAALGLVFF. At 74–278 the chain is on the extracellular side; it reads QFYQLSNTQQ…LHEPLSRRWR (205 aa). N95 and N169 each carry an N-linked (GlcNAc...) asparagine glycan. The C-type lectin domain maps to 144 to 258; the sequence is HGDKCYQFYK…CRELRRCACE (115 aa). 2 disulfides stabilise this stretch: C165–C257 and C236–C249.

It is found in the membrane. This is C-type lectin domain family 1 member A (CLEC1A) from Bos taurus (Bovine).